The chain runs to 492 residues: Ribose import ATP-binding protein RbsA (492 aa).

2 ABC transporter domains span residues 3–239 (IDMR…VGRK) and 238–492 (RKLE…TGGK). Position 35-42 (35-42 (GENGAGKS)) interacts with ATP.

The protein belongs to the ABC transporter superfamily. Ribose importer (TC 3.A.1.2.1) family. In terms of assembly, the complex is composed of an ATP-binding protein (RbsA), two transmembrane proteins (RbsC) and a solute-binding protein (RbsB).

Its subcellular location is the cell membrane. It catalyses the reaction D-ribose(out) + ATP + H2O = D-ribose(in) + ADP + phosphate + H(+). Its function is as follows. Part of the ABC transporter complex RbsABC involved in ribose import. Responsible for energy coupling to the transport system. This Streptococcus agalactiae serotype III (strain NEM316) protein is Ribose import ATP-binding protein RbsA.